We begin with the raw amino-acid sequence, 708 residues long: Outer capsid protein mu-1 (708 aa).

Gly-2 is lipidated: N-myristoyl glycine; by host. N-linked (GlcNAc...) asparagine; by host glycosylation is found at Asn-3, Asn-12, Asn-81, Asn-110, Asn-458, Asn-482, Asn-528, and Asn-659. The interval 675–708 is disordered; it reads PKPDCPTSGDSGESSNRRVKRDSYAGVVKRGYTR.

Belongs to the orthoreovirus mu-1 protein family. As to quaternary structure, heterohexamer of three sigma-3 and three Mu-1 proteins. Cleaved during the endosomal proteolytic disassembly of the outer capsid. Mu-1 is proteolytically cleaved into mu-1N and mu-1C during the maturation step to generate the ISVP. Cleavage of mu-1 to mu-1C is dependent on myristoylation and binding to sigma-3 protein. Mu-1C is further cleaved into delta (59 kDa), and phi (13 kDa) segments during entry into the host cell cytoplasm. Post-translationally, mu-1 and mu-1N are N-terminally myristoylated. This acylation is essential for the membrane fusion activity.

It is found in the virion. Its subcellular location is the host cell membrane. The protein resides in the host endoplasmic reticulum. It localises to the host mitochondrion. Its function is as follows. Major outer capsid protein involved in host cell membrane penetration. In the endocytic compartment, outer-capsid protein sigma-3 is removed by cathepsin proteases, which exposes the viral membrane-penetration protein mu-1. Both myristoylated peptides mu-1N and phi are released during infectious subvirion particles (ISVP) formation in the endosome. They associate with host membranes and mu-1N induces permeabilization and delivery of transcriptionally active viral particles into the host cell cytoplasm. Seems to induce apoptosis in the host cell. The viral outer shell polypeptides, of which mu-1 is one, impose structural constraints that prevent elongation of nascent transcripts by the RNA-dependent RNA polymerase lambda-3. The sequence is that of Outer capsid protein mu-1 (M2) from Mammalia (T3D).